We begin with the raw amino-acid sequence, 1478 residues long: Phospholipase B1, membrane-associated (1478 aa).

The first 27 residues, 1 to 27, serve as a signal peptide directing secretion; the sequence is MELYPGVSPVGLLLLLLLGQGPSQIHG. Over 28 to 1422 the chain is Extracellular; sequence SSGENTLAWQ…KAEEPSNALY (1395 aa). 4 consecutive repeat copies span residues 43-351, 366-711, 712-1058, and 1068-1407. The tract at residues 43 to 1407 is 4 X 308-326 AA approximate repeats; the sequence is WTLKNFPFPC…RPFLYTLRNS (1365 aa). A glycan (N-linked (GlcNAc...) asparagine) is linked at Asn-180. Active-site residues include Ser-404 and Asp-518. 3 N-linked (GlcNAc...) asparagine glycosylation sites follow: Asn-525, Asn-626, and Asn-637. The active site involves His-659. Asn-715, Asn-764, Asn-787, Asn-801, Asn-830, Asn-926, Asn-1227, Asn-1280, Asn-1289, and Asn-1387 each carry an N-linked (GlcNAc...) asparagine glycan. The tract at residues 1408–1450 is necessary for membrane localization; the sequence is QLLPDKAEEPSNALYWAVPVAAIGGLAVGILGVMLWRTVKPVQ. A helical transmembrane segment spans residues 1423 to 1443; the sequence is WAVPVAAIGGLAVGILGVMLW. Over 1444–1478 the chain is Cytoplasmic; that stretch reads RTVKPVQQEEEEEDTLPNTSVTQDAVSEKRLKAGN. Residues 1451 to 1478 are disordered; the sequence is QEEEEEDTLPNTSVTQDAVSEKRLKAGN. Over residues 1459–1468 the composition is skewed to polar residues; the sequence is LPNTSVTQDA. Residues 1469–1478 show a composition bias toward basic and acidic residues; sequence VSEKRLKAGN.

This sequence belongs to the 'GDSL' lipolytic enzyme family. Phospholipase B1 subfamily. In terms of processing, undergoes proteolytic cleavage in the ileum.

It is found in the apical cell membrane. It catalyses the reaction a 1,2-diacyl-sn-glycero-3-phosphocholine + H2O = a 1-acyl-sn-glycero-3-phosphocholine + a fatty acid + H(+). The catalysed reaction is a 1-O-alkyl-2-acyl-sn-glycero-3-phosphocholine + H2O = a 1-O-alkyl-sn-glycero-3-phosphocholine + a fatty acid + H(+). It carries out the reaction a 1-acyl-sn-glycero-3-phosphocholine + H2O = sn-glycerol 3-phosphocholine + a fatty acid + H(+). The enzyme catalyses a triacylglycerol + H2O = a diacylglycerol + a fatty acid + H(+). It catalyses the reaction 1,2-dihexadecanoyl-sn-glycero-3-phosphocholine + H2O = 1-hexadecanoyl-sn-glycero-3-phosphocholine + hexadecanoate + H(+). The catalysed reaction is 1-hexadecanoyl-2-(9Z-octadecenoyl)-sn-glycero-3-phosphocholine + H2O = 1-hexadecanoyl-sn-glycero-3-phosphocholine + (9Z)-octadecenoate + H(+). It carries out the reaction 1,2-di-(9Z-octadecenoyl)-sn-glycero-3-phosphocholine + H2O = 1-(9Z-octadecenoyl)-sn-glycero-3-phosphocholine + (9Z)-octadecenoate + H(+). The enzyme catalyses 1-hexadecanoyl-2-(9Z,12Z-octadecadienoyl)-sn-glycero-3-phosphocholine + H2O = (9Z,12Z)-octadecadienoate + 1-hexadecanoyl-sn-glycero-3-phosphocholine + H(+). It catalyses the reaction 1-hexadecanoyl-2-(9Z,12Z-octadecadienoyl)-sn-glycero-3-phosphocholine + H2O = 2-(9Z,12Z-octadecadienoyl)-sn-glycero-3-phosphocholine + hexadecanoate + H(+). The catalysed reaction is 1-hexadecanoyl-2-(9Z-octadecenoyl)-sn-glycero-3-phosphoethanolamine + H2O = 1-hexadecanoyl-sn-glycero-3-phosphoethanolamine + (9Z)-octadecenoate + H(+). It carries out the reaction 1-hexadecanoyl-2-(9Z-octadecenoyl)-sn-glycero-3-phospho-(1'-sn-glycerol) + H2O = 1-hexadecanoyl-sn-glycero-3-phospho-(1'-sn-glycerol) + (9Z)-octadecenoate + H(+). The enzyme catalyses 1,2-dihexadecanoyl-sn-glycero-3-phosphocholine + 2 H2O = sn-glycerol 3-phosphocholine + 2 hexadecanoate + 2 H(+). It catalyses the reaction 1-O-hexadecyl-2-(9Z)-octadecenoyl-sn-glycero-3-phosphocholine + H2O = 1-O-hexadecyl-sn-glycero-3-phosphocholine + (9Z)-octadecenoate + H(+). The catalysed reaction is 1-hexadecanoyl-sn-glycero-3-phosphocholine + H2O = sn-glycerol 3-phosphocholine + hexadecanoate + H(+). It carries out the reaction 1,2,3-tri-(9Z-octadecenoyl)-glycerol + H2O = di-(9Z)-octadecenoylglycerol + (9Z)-octadecenoate + H(+). The enzyme catalyses 1-hexadecanoyl-2-(9Z)-octadecenoyl-3-octadecanoyl-sn-glycerol + H2O = 1-hexadecanoyl-2-(9Z-octadecenoyl)-sn-glycerol + octadecanoate + H(+). It catalyses the reaction 1,3-dihexadecanoyl-2-(9Z-octadecenoyl)glycerol + H2O = 1,3-dihexadecanoylglycerol + (9Z)-octadecenoate + H(+). The catalysed reaction is 1,3-dihexadecanoyl-2-(9Z-octadecenoyl)glycerol + H2O = 1-hexadecanoyl-2-(9Z-octadecenoyl)-glycerol + hexadecanoate + H(+). It carries out the reaction 1-hexadecanoyl-2-(9Z)-octadecenoyl-3-octadecanoyl-sn-glycerol + H2O = 1-hexadecanoyl-3-octadecanoyl-sn-glycerol + (9Z)-octadecenoate + H(+). The enzyme catalyses 1-hexadecanoyl-2-(9Z)-octadecenoyl-3-octadecanoyl-sn-glycerol + H2O = 2-(9Z-octadecenoyl)-3-octadecanoyl-sn-glycerol + hexadecanoate + H(+). It catalyses the reaction 1-octadecanoyl-2-(9Z,12Z)-octadecadienoyl-sn-glycerol + H2O = 1-octadecanoyl-sn-glycerol + (9Z,12Z)-octadecadienoate + H(+). The catalysed reaction is 1,2-di-(9Z-octadecenoyl)-sn-glycerol + H2O = 1-(9Z-octadecenoyl)-sn-glycerol + (9Z)-octadecenoate + H(+). It carries out the reaction 2,3-di-(9Z)-octadecenoyl-sn-glycerol + H2O = 3-(9Z-octadecenoyl)-sn-glycerol + (9Z)-octadecenoate + H(+). The enzyme catalyses 1,3-di-(9Z-octadecenoyl)-glycerol + H2O = 1-(9Z-octadecenoyl)-glycerol + (9Z)-octadecenoate + H(+). It catalyses the reaction 1-(9Z-octadecenoyl)-glycerol + H2O = glycerol + (9Z)-octadecenoate + H(+). The catalysed reaction is 2-(9Z-octadecenoyl)-glycerol + H2O = glycerol + (9Z)-octadecenoate + H(+). Calcium-independent membrane-associated phospholipase that catalyzes complete diacylation of phospholipids by hydrolyzing both sn-1 and sn-2 fatty acyl chains attached to the glycerol backbone (phospholipase B activity). Has dual phospholipase and lysophospholipase activities toward diacylphospholipids. Preferentially cleaves sn-2 ester bonds over sn-1 bonds. Acts as a lipase toward glycerolipid substrates. Hydrolyzes fatty acyl chains of diacylglycerols with preference for the sn-2 position and of triacylglycerols with not positional selectivity. May also hydrolyze long chain retinyl esters such as retinyl palmitate. May contribute to digestion of dietary phospholipids, glycerolipids and retinoids, facilitating lipid absorption at the brush border. The sequence is that of Phospholipase B1, membrane-associated (Plb1) from Mus musculus (Mouse).